Here is a 274-residue protein sequence, read N- to C-terminus: Ribosomal RNA small subunit methyltransferase A (274 aa).

S-adenosyl-L-methionine is bound by residues Asn-26, Leu-28, Gly-53, Glu-74, Asp-94, and Asn-114.

This sequence belongs to the class I-like SAM-binding methyltransferase superfamily. rRNA adenine N(6)-methyltransferase family. RsmA subfamily.

The protein localises to the cytoplasm. The catalysed reaction is adenosine(1518)/adenosine(1519) in 16S rRNA + 4 S-adenosyl-L-methionine = N(6)-dimethyladenosine(1518)/N(6)-dimethyladenosine(1519) in 16S rRNA + 4 S-adenosyl-L-homocysteine + 4 H(+). Its function is as follows. Specifically dimethylates two adjacent adenosines (A1518 and A1519) in the loop of a conserved hairpin near the 3'-end of 16S rRNA in the 30S particle. May play a critical role in biogenesis of 30S subunits. The chain is Ribosomal RNA small subunit methyltransferase A from Bdellovibrio bacteriovorus (strain ATCC 15356 / DSM 50701 / NCIMB 9529 / HD100).